Here is a 378-residue protein sequence, read N- to C-terminus: Cyclic GMP-AMP synthase-like receptor 1 (378 aa).

Glu-71, Asp-73, and Asp-187 together coordinate Mg(2+). Residue 71-73 (EFD) coordinates ATP. GTP is bound by residues Asp-187 and 233 to 240 (TSSFYEAE). Residues 237-240 (YEAE), Lys-258, and 271-275 (SYHIK) each bind ATP.

The protein belongs to the mab-21 family. It depends on Mg(2+) as a cofactor. Requires Mn(2+) as cofactor.

The catalysed reaction is GTP + ATP = 3',2'-cGAMP + 2 diphosphate. It carries out the reaction GTP + ATP = pppA(2'-5')pG + diphosphate. It catalyses the reaction pppA(2'-5')pG = 3',2'-cGAMP + diphosphate. With respect to regulation, the enzyme activity is specifically activated by double-stranded RNA (dsRNA). Recognizes long dsRNA (&gt;30 bp) with no preference for 5' RNA phosphorylation. In terms of biological role, nucleotidyltransferase that catalyzes the formation of cyclic GMP-AMP (3',2'-cGAMP) from ATP and GTP and plays a key role in antiviral innate immunity. Synthesizes 3',2'-cGAMP in a two-step reaction through production of the linear intermediate pppA(2'-5')pG. Acts as a key sensor of double-stranded RNA (dsRNA), the presence of dsRNA in the cytoplasm being a danger signal that triggers the immune responses. Directly binds dsRNA, activating the nucleotidyltransferase activity, leading to synthesis of 3',2'-cGAMP, a second messenger that binds to and activates Sting, thereby triggering the antiviral immune response via activation of the NF-kappa-B transcription factor Rel (Relish). 3',2'-cGAMP is protected from poxin cleavage. This chain is Cyclic GMP-AMP synthase-like receptor 1, found in Drosophila melanogaster (Fruit fly).